The following is a 128-amino-acid chain: Prokineticin-2 (128 aa).

Residues 1 to 26 form the signal peptide; the sequence is MGDPRCAPLLLLLLLPLLFTPPAGDA. Intrachain disulfides connect cysteine 33–cysteine 45, cysteine 39–cysteine 57, cysteine 44–cysteine 106, cysteine 67–cysteine 114, and cysteine 108–cysteine 124.

The protein belongs to the AVIT (prokineticin) family. Expressed in the SCN and among a few other discrete brain areas, including the islands of Calleja, media l preoptic area of the hypothalamus and the shell of the nucleus accumbens. Highly expressed in testis. In the SCN, expression subjected to high amplitude of circadian oscillation.

Its subcellular location is the secreted. May function as an output molecule from the suprachiasmatic nucleus (SCN) that transmits behavioral circadian rhythm. May also function locally within the SCN to synchronize output. Potently contracts gastrointestinal (GI) smooth muscle. The chain is Prokineticin-2 (Prok2) from Mus musculus (Mouse).